Consider the following 444-residue polypeptide: Baeyer-Villiger oxidase ptaJ (444 aa).

Belongs to the questin oxidase family. NADPH serves as cofactor.

It participates in secondary metabolite biosynthesis. Baeyer-Villiger oxidase; part of the gene cluster that mediates the biosynthesis of pestheic acid, a diphenyl ether which is a biosynthetic precursor of the unique chloropupukeananes. The biosynthesis initiates from condensation of acetate and malonate units catalyzed by the non-reducing PKS ptaA. As the ptaA protein is TE/CLC domain-deficient, hydrolysis and Claisen cyclization of the polyketide could be catalyzed by ptaB containing a beta-lactamase domain. The ptaB protein might hydrolyze the thioester bond between the ACP of ptaA and the intermediate to release atrochrysone carboxylic acid, which is spontaneously dehydrated to form endocrocin anthrone. Endocrocin anthrone is then converted to endocrocin, catalyzed by the anthrone oxygenase ptaC. Spontaneous decarboxylation of endocrocin occurs to generate emodin. An O-methyltransferase (ptaH or ptaI) could methylate emodin to form physcion. PtaJ could then catalyze the oxidative cleavage of physcion, and rotation of the intermediate could then afford desmethylisosulochrin. PtaF, a putative NADH-dependent oxidoreductase, might also participate in the oxidative cleavage step. Desmethylisosulochrin is then transformed by another O-methyltransferase (ptaH or ptaI) to form isosulochrin. Chlorination of isosulochrin by ptaM in the cyclohexadienone B ring then produces chloroisosulochrin. PtaE is responsible for the oxidative coupling reactions of both benzophenones isosulouchrin and chloroisosulouchrin to RES-1214-1 and pestheic acid respectively, regardless of chlorination. This Pestalotiopsis fici (strain W106-1 / CGMCC3.15140) protein is Baeyer-Villiger oxidase ptaJ.